We begin with the raw amino-acid sequence, 405 residues long: Riboflavin biosynthesis protein RibBA (405 aa).

Residues 1-205 (MSEIQLNTIE…IKDLIAYRLR (205 aa)) form a DHBP synthase region. D-ribulose 5-phosphate contacts are provided by residues 30 to 31 (RE), Asp-35, 144 to 148 (RAGHT), and Glu-168. Glu-31 contributes to the Mg(2+) binding site. His-147 serves as a coordination point for Mg(2+). The GTP cyclohydrolase II stretch occupies residues 206–405 (TESIVENGVE…RMGHVLHNIK (200 aa)). GTP is bound at residue 256 to 260 (RVHSS). The Zn(2+) site is built by Cys-261, Cys-272, and Cys-274. Residues Gln-277, 299–301 (EGR), and Thr-321 contribute to the GTP site. Asp-333 acts as the Proton acceptor; for GTP cyclohydrolase activity in catalysis. The Nucleophile; for GTP cyclohydrolase activity role is filled by Arg-335. The GTP site is built by Ser-356 and Lys-361.

In the N-terminal section; belongs to the DHBP synthase family. The protein in the C-terminal section; belongs to the GTP cyclohydrolase II family. Requires Mg(2+) as cofactor. Mn(2+) serves as cofactor. The cofactor is Zn(2+).

It carries out the reaction D-ribulose 5-phosphate = (2S)-2-hydroxy-3-oxobutyl phosphate + formate + H(+). The catalysed reaction is GTP + 4 H2O = 2,5-diamino-6-hydroxy-4-(5-phosphoribosylamino)-pyrimidine + formate + 2 phosphate + 3 H(+). The protein operates within cofactor biosynthesis; riboflavin biosynthesis; 2-hydroxy-3-oxobutyl phosphate from D-ribulose 5-phosphate: step 1/1. It participates in cofactor biosynthesis; riboflavin biosynthesis; 5-amino-6-(D-ribitylamino)uracil from GTP: step 1/4. In terms of biological role, catalyzes the conversion of D-ribulose 5-phosphate to formate and 3,4-dihydroxy-2-butanone 4-phosphate. Catalyzes the conversion of GTP to 2,5-diamino-6-ribosylamino-4(3H)-pyrimidinone 5'-phosphate (DARP), formate and pyrophosphate. The polypeptide is Riboflavin biosynthesis protein RibBA (Parabacteroides distasonis (strain ATCC 8503 / DSM 20701 / CIP 104284 / JCM 5825 / NCTC 11152)).